The chain runs to 667 residues: Probable potassium transport system protein Kup (667 aa).

Helical transmembrane passes span 16 to 36, 58 to 78, 101 to 121, 146 to 166, 167 to 187, 221 to 241, 253 to 273, 294 to 314, 343 to 363, 373 to 393, 399 to 419, and 431 to 451; these read GFII…LYTM, VSLI…LIAL, WLII…ALTP, TNVI…QRFG, TGVI…VLGI, IFIL…YSDL, WPFV…WILA, VYLV…LISG, LYIP…VLYF, YGLA…YYLI, PLLA…FFLA, and VVVL…GTVI.

It belongs to the HAK/KUP transporter (TC 2.A.72) family.

It localises to the cell membrane. The catalysed reaction is K(+)(in) + H(+)(in) = K(+)(out) + H(+)(out). In terms of biological role, transport of potassium into the cell. Likely operates as a K(+):H(+) symporter. This chain is Probable potassium transport system protein Kup, found in Streptococcus equi subsp. zooepidemicus (strain MGCS10565).